A 162-amino-acid chain; its full sequence is uncharacterized protein (162 aa).

The next 3 helical transmembrane spans lie at A28–F50, L57–L76, and Y108–A130.

It is found in the cell membrane. This is an uncharacterized protein from Treponema pallidum (strain Nichols).